The sequence spans 531 residues: Arginine--tRNA ligase (531 aa).

The 'HIGH' region motif lies at 113–123 (ANPTGPLHIGH).

Belongs to the class-I aminoacyl-tRNA synthetase family. As to quaternary structure, monomer.

Its subcellular location is the cytoplasm. It carries out the reaction tRNA(Arg) + L-arginine + ATP = L-arginyl-tRNA(Arg) + AMP + diphosphate. This is Arginine--tRNA ligase from Campylobacter lari (strain RM2100 / D67 / ATCC BAA-1060).